The following is a 329-amino-acid chain: Ubiquitin carboxyl-terminal hydrolase isozyme L5 (329 aa).

A UCH catalytic domain is found at 7-225 (EWCLMESDPG…IRFNLMAIVS (219 aa)). The residue at position 47 (lysine 47) is an N6-succinyllysine. Catalysis depends on cysteine 88, which acts as the Nucleophile. N6-acetyllysine is present on lysine 158. Histidine 164 (proton donor) is an active-site residue. Lysine 289 is subject to N6-succinyllysine. The 29-residue stretch at 291–319 (NYLPFIMELLKTLAEHQQLIPLVEKAKEK) folds into the ULD domain. The interaction with ADRM1 stretch occupies residues 313–329 (VEKAKEKQNAKKAQETK).

This sequence belongs to the peptidase C12 family. In terms of assembly, component of the 19S (PA700) regulatory complex of the 26S proteasome. Interacts with ADRM1 and NFRKB; in vitro ADRM1 and NFRKB compete for interaction with UCHL5. Component of the INO80 complex; specifically part of a complex module associated with N-terminus of INO80.

The protein localises to the cytoplasm. It is found in the nucleus. It carries out the reaction Thiol-dependent hydrolysis of ester, thioester, amide, peptide and isopeptide bonds formed by the C-terminal Gly of ubiquitin (a 76-residue protein attached to proteins as an intracellular targeting signal).. Activated by ADRM1. Inhibited by interaction with NFRKB. Functionally, protease that specifically cleaves 'Lys-48'-linked polyubiquitin chains. Deubiquitinating enzyme associated with the 19S regulatory subunit of the 26S proteasome. Putative regulatory component of the INO80 complex; however is inactive in the INO80 complex and is activated by a transient interaction of the INO80 complex with the proteasome via ADRM1. This is Ubiquitin carboxyl-terminal hydrolase isozyme L5 (UCHL5) from Homo sapiens (Human).